Reading from the N-terminus, the 420-residue chain is Tyrosine--tRNA ligase (420 aa).

Tyr-36 serves as a coordination point for L-tyrosine. Residues Pro-41 to His-50 carry the 'HIGH' region motif. 2 residues coordinate L-tyrosine: Tyr-170 and Gln-174. The 'KMSKS' region signature appears at Lys-231 to Thr-235. Lys-234 lines the ATP pocket. Positions Arg-353 to Lys-420 constitute an S4 RNA-binding domain.

The protein belongs to the class-I aminoacyl-tRNA synthetase family. TyrS type 1 subfamily. In terms of assembly, homodimer.

It localises to the cytoplasm. It catalyses the reaction tRNA(Tyr) + L-tyrosine + ATP = L-tyrosyl-tRNA(Tyr) + AMP + diphosphate + H(+). Functionally, catalyzes the attachment of tyrosine to tRNA(Tyr) in a two-step reaction: tyrosine is first activated by ATP to form Tyr-AMP and then transferred to the acceptor end of tRNA(Tyr). This chain is Tyrosine--tRNA ligase, found in Staphylococcus saprophyticus subsp. saprophyticus (strain ATCC 15305 / DSM 20229 / NCIMB 8711 / NCTC 7292 / S-41).